The primary structure comprises 200 residues: Small ribosomal subunit protein uS4 (200 aa).

Positions serine 94–valine 157 constitute an S4 RNA-binding domain.

The protein belongs to the universal ribosomal protein uS4 family. Part of the 30S ribosomal subunit. Contacts protein S5. The interaction surface between S4 and S5 is involved in control of translational fidelity.

One of the primary rRNA binding proteins, it binds directly to 16S rRNA where it nucleates assembly of the body of the 30S subunit. Its function is as follows. With S5 and S12 plays an important role in translational accuracy. The protein is Small ribosomal subunit protein uS4 of Metamycoplasma arthritidis (strain 158L3-1) (Mycoplasma arthritidis).